Reading from the N-terminus, the 337-residue chain is HTH-type transcriptional repressor PurR (337 aa).

The region spanning 2–56 (ATIKDVAKLAAVSTTTVSHVINKTRFVAEATQKRVWEAVEELNYAPSAVARSLKC) is the HTH lacI-type domain. Positions 4-23 (IKDVAKLAAVSTTTVSHVIN) form a DNA-binding region, H-T-H motif. A DNA-binding region spans residues 48–56 (SAVARSLKC). Residues F73, K189, T191, F220, and D276 each coordinate hypoxanthine.

In terms of assembly, homodimer.

Its pathway is purine metabolism; purine nucleotide biosynthesis [regulation]. Its function is as follows. Is the main repressor of the genes involved in the de novo synthesis of purine nucleotides, regulating purB, purC, purEK, purF, purHD, purL, purMN and guaBA expression. PurR is allosterically activated to bind its cognate DNA by binding the purine corepressors, hypoxanthine or guanine, thereby effecting transcription repression. The sequence is that of HTH-type transcriptional repressor PurR from Aliivibrio fischeri (strain MJ11) (Vibrio fischeri).